A 118-amino-acid polypeptide reads, in one-letter code: NAD(P)H-quinone oxidoreductase subunit M (118 aa).

The protein belongs to the complex I NdhM subunit family. NDH-1 can be composed of about 15 different subunits; different subcomplexes with different compositions have been identified which probably have different functions.

The protein resides in the cellular thylakoid membrane. The enzyme catalyses a plastoquinone + NADH + (n+1) H(+)(in) = a plastoquinol + NAD(+) + n H(+)(out). The catalysed reaction is a plastoquinone + NADPH + (n+1) H(+)(in) = a plastoquinol + NADP(+) + n H(+)(out). Its function is as follows. NDH-1 shuttles electrons from an unknown electron donor, via FMN and iron-sulfur (Fe-S) centers, to quinones in the respiratory and/or the photosynthetic chain. The immediate electron acceptor for the enzyme in this species is believed to be plastoquinone. Couples the redox reaction to proton translocation, and thus conserves the redox energy in a proton gradient. Cyanobacterial NDH-1 also plays a role in inorganic carbon-concentration. This Rippkaea orientalis (strain PCC 8801 / RF-1) (Cyanothece sp. (strain PCC 8801)) protein is NAD(P)H-quinone oxidoreductase subunit M.